The primary structure comprises 584 residues: WD repeat-containing protein JIP5 (584 aa).

4 WD repeats span residues 128 to 173, 180 to 219, 269 to 314, and 378 to 415; these read RHKG…GKVD, SAKD…GTNK, DQED…LADQ, and DAVD…DQEE. 2 disordered regions span residues 409–497 and 516–563; these read YSDD…SEYI and KKLI…EKKV. Acidic residues-rich tracts occupy residues 412 to 429 and 450 to 460; these read DQEE…EEDS and FDSENNDDGEE. Composition is skewed to basic and acidic residues over residues 483 to 493 and 528 to 552; these read TRNEENKDNTK and SKKE…EVPQ.

Belongs to the WD repeat WDR55 family.

Its subcellular location is the nucleus. The protein localises to the nucleolus. This Lodderomyces elongisporus (strain ATCC 11503 / CBS 2605 / JCM 1781 / NBRC 1676 / NRRL YB-4239) (Yeast) protein is WD repeat-containing protein JIP5 (JIP5).